A 144-amino-acid polypeptide reads, in one-letter code: Large ribosomal subunit protein uL15 (144 aa).

Positions 1–45 are disordered; it reads MNLNTLSPDPGSRPSRRRVGRGIGSGLGKTCGKGHKGQKSRAGGY. Residues 21–31 are compositionally biased toward gly residues; the sequence is RGIGSGLGKTC.

This sequence belongs to the universal ribosomal protein uL15 family. Part of the 50S ribosomal subunit.

Functionally, binds to the 23S rRNA. The polypeptide is Large ribosomal subunit protein uL15 (Legionella pneumophila (strain Paris)).